We begin with the raw amino-acid sequence, 305 residues long: UDP-3-O-acyl-N-acetylglucosamine deacetylase (305 aa).

Residues His78, His237, and Asp241 each coordinate Zn(2+). Residue His264 is the Proton donor of the active site.

It belongs to the LpxC family. Requires Zn(2+) as cofactor.

The enzyme catalyses a UDP-3-O-[(3R)-3-hydroxyacyl]-N-acetyl-alpha-D-glucosamine + H2O = a UDP-3-O-[(3R)-3-hydroxyacyl]-alpha-D-glucosamine + acetate. It participates in glycolipid biosynthesis; lipid IV(A) biosynthesis; lipid IV(A) from (3R)-3-hydroxytetradecanoyl-[acyl-carrier-protein] and UDP-N-acetyl-alpha-D-glucosamine: step 2/6. In terms of biological role, catalyzes the hydrolysis of UDP-3-O-myristoyl-N-acetylglucosamine to form UDP-3-O-myristoylglucosamine and acetate, the committed step in lipid A biosynthesis. This is UDP-3-O-acyl-N-acetylglucosamine deacetylase from Burkholderia ambifaria (strain ATCC BAA-244 / DSM 16087 / CCUG 44356 / LMG 19182 / AMMD) (Burkholderia cepacia (strain AMMD)).